The primary structure comprises 46 residues: MTQRTLRGTNRRRIRVSGFRARMRTATGRQVLRRRRAKGRYRLAVS.

Belongs to the bacterial ribosomal protein bL34 family.

The polypeptide is Large ribosomal subunit protein bL34 (Synechococcus sp. (strain JA-2-3B'a(2-13)) (Cyanobacteria bacterium Yellowstone B-Prime)).